A 373-amino-acid polypeptide reads, in one-letter code: STE20-related kinase adapter protein alpha (373 aa).

The Protein kinase domain maps to 11 to 321; that stretch reads YELLTVIGKG…ASTLLNHSFF (311 aa). Polar residues predominate over residues 255–281; the sequence is STSRSAANSGLSESLAPSTPRTSNGDS. Residues 255-288 are disordered; sequence STSRSAANSGLSESLAPSTPRTSNGDSPSHPYHR. Thr361 bears the Phosphothreonine; by LKB1 mark.

This sequence belongs to the protein kinase superfamily. STE Ser/Thr protein kinase family. STE20 subfamily. In terms of assembly, component of a trimeric complex composed of STK11/LKB1, STRAD (STRADA or STRADB) and CAB39/MO25 (CAB39/MO25alpha or CAB39L/MO25beta): the complex tethers STK11/LKB1 in the cytoplasm and stimulates its catalytic activity.

The protein localises to the nucleus. It localises to the cytoplasm. Its function is as follows. Pseudokinase which, in complex with CAB39/MO25 (CAB39/MO25alpha or CAB39L/MO25beta), binds to and activates STK11/LKB1. Adopts a closed conformation typical of active protein kinases and binds STK11/LKB1 as a pseudosubstrate, promoting conformational change of STK11/LKB1 in an active conformation. In Bos taurus (Bovine), this protein is STE20-related kinase adapter protein alpha (STRADA).